Reading from the N-terminus, the 398-residue chain is Acetate kinase (398 aa).

Asn8 serves as a coordination point for Mg(2+). Lys15 contributes to the ATP binding site. Arg89 contributes to the substrate binding site. The Proton donor/acceptor role is filled by Asp146. ATP is bound by residues 206 to 210, 283 to 285, and 331 to 335; these read HIGNG, DMR, and GMGEN. Glu383 lines the Mg(2+) pocket.

Belongs to the acetokinase family. Homodimer. The cofactor is Mg(2+). Mn(2+) serves as cofactor.

It localises to the cytoplasm. It carries out the reaction acetate + ATP = acetyl phosphate + ADP. It participates in metabolic intermediate biosynthesis; acetyl-CoA biosynthesis; acetyl-CoA from acetate: step 1/2. Its function is as follows. Catalyzes the formation of acetyl phosphate from acetate and ATP. Can also catalyze the reverse reaction. The polypeptide is Acetate kinase (Streptococcus pyogenes serotype M5 (strain Manfredo)).